We begin with the raw amino-acid sequence, 211 residues long: NADH-quinone oxidoreductase subunit I (211 aa).

2 consecutive 4Fe-4S ferredoxin-type domains span residues 90 to 119 (RLWE…IDTK) and 129 to 158 (TEYS…HGGE). [4Fe-4S] cluster is bound by residues C99, C102, C105, C109, C138, C141, C144, and C148.

The protein belongs to the complex I 23 kDa subunit family. NDH-1 is composed of 14 different subunits. Subunits NuoA, H, J, K, L, M, N constitute the membrane sector of the complex. Requires [4Fe-4S] cluster as cofactor.

It is found in the cell inner membrane. It carries out the reaction a quinone + NADH + 5 H(+)(in) = a quinol + NAD(+) + 4 H(+)(out). NDH-1 shuttles electrons from NADH, via FMN and iron-sulfur (Fe-S) centers, to quinones in the respiratory chain. The immediate electron acceptor for the enzyme in this species is believed to be ubiquinone. Couples the redox reaction to proton translocation (for every two electrons transferred, four hydrogen ions are translocated across the cytoplasmic membrane), and thus conserves the redox energy in a proton gradient. This Sulfurimonas denitrificans (strain ATCC 33889 / DSM 1251) (Thiomicrospira denitrificans (strain ATCC 33889 / DSM 1251)) protein is NADH-quinone oxidoreductase subunit I.